Reading from the N-terminus, the 1551-residue chain is Pentafunctional AROM polypeptide 1 (1551 aa).

The interval 1-379 is 3-dehydroquinate synthase; that stretch reads MSIEKVSILG…YESKAHQIFK (379 aa). NAD(+) is bound by residues 42–44, 80–83, 111–113, and Asp-116; these read DTN, ENHK, and GGV. Arg-127 serves as a coordination point for 7-phospho-2-dehydro-3-deoxy-D-arabino-heptonate. 136–137 contributes to the NAD(+) binding site; it reads TT. Residues Asp-143 and Lys-149 each contribute to the 7-phospho-2-dehydro-3-deoxy-D-arabino-heptonate site. Lys-158 serves as a coordination point for NAD(+). Residue Asn-159 participates in 7-phospho-2-dehydro-3-deoxy-D-arabino-heptonate binding. Residues 176–179 and Asn-187 contribute to the NAD(+) site; that span reads FLQT. Glu-191 contacts Zn(2+). Residues 191-194 and Lys-243 each bind 7-phospho-2-dehydro-3-deoxy-D-arabino-heptonate; that span reads EVVK. The active-site Proton acceptor; for 3-dehydroquinate synthase activity is the Glu-253. Residues 257-261 and His-264 contribute to the 7-phospho-2-dehydro-3-deoxy-D-arabino-heptonate site; that span reads RNLLN. His-264 is a binding site for Zn(2+). Residue His-268 is the Proton acceptor; for 3-dehydroquinate synthase activity of the active site. Positions 280 and 351 each coordinate 7-phospho-2-dehydro-3-deoxy-D-arabino-heptonate. Position 280 (His-280) interacts with Zn(2+). The tract at residues 392-835 is EPSP synthase; that stretch reads VHPFANRHPE…WDVLHSKFNA (444 aa). The interval 854 to 1044 is shikimate kinase; that stretch reads DRSIVIIGMR…LPATRSTFVT (191 aa). 861 to 868 contributes to the ATP binding site; the sequence is GMRAAGKT. The interval 1045 to 1258 is 3-dehydroquinase; sequence LTYPDLRKVP…IGVGQLSLKE (214 aa). Catalysis depends on His-1162, which acts as the Proton acceptor; for 3-dehydroquinate dehydratase activity. The active-site Schiff-base intermediate with substrate; for 3-dehydroquinate dehydratase activity is the Lys-1191. Residues 1271-1551 are shikimate dehydrogenase; the sequence is EKEFWVVGSP…KVIHSAVLNE (281 aa).

In the N-terminal section; belongs to the sugar phosphate cyclases superfamily. Dehydroquinate synthase family. This sequence in the 2nd section; belongs to the EPSP synthase family. It in the 3rd section; belongs to the shikimate kinase family. The protein in the 4th section; belongs to the type-I 3-dehydroquinase family. In the C-terminal section; belongs to the shikimate dehydrogenase family. In terms of assembly, homodimer. The cofactor is Zn(2+).

The protein localises to the cytoplasm. It carries out the reaction 7-phospho-2-dehydro-3-deoxy-D-arabino-heptonate = 3-dehydroquinate + phosphate. The enzyme catalyses 3-dehydroquinate = 3-dehydroshikimate + H2O. It catalyses the reaction shikimate + NADP(+) = 3-dehydroshikimate + NADPH + H(+). The catalysed reaction is shikimate + ATP = 3-phosphoshikimate + ADP + H(+). It carries out the reaction 3-phosphoshikimate + phosphoenolpyruvate = 5-O-(1-carboxyvinyl)-3-phosphoshikimate + phosphate. It participates in metabolic intermediate biosynthesis; chorismate biosynthesis; chorismate from D-erythrose 4-phosphate and phosphoenolpyruvate: step 2/7. The protein operates within metabolic intermediate biosynthesis; chorismate biosynthesis; chorismate from D-erythrose 4-phosphate and phosphoenolpyruvate: step 3/7. It functions in the pathway metabolic intermediate biosynthesis; chorismate biosynthesis; chorismate from D-erythrose 4-phosphate and phosphoenolpyruvate: step 4/7. Its pathway is metabolic intermediate biosynthesis; chorismate biosynthesis; chorismate from D-erythrose 4-phosphate and phosphoenolpyruvate: step 5/7. It participates in metabolic intermediate biosynthesis; chorismate biosynthesis; chorismate from D-erythrose 4-phosphate and phosphoenolpyruvate: step 6/7. The AROM polypeptide catalyzes 5 consecutive enzymatic reactions in prechorismate polyaromatic amino acid biosynthesis. The protein is Pentafunctional AROM polypeptide 1 of Lodderomyces elongisporus (strain ATCC 11503 / CBS 2605 / JCM 1781 / NBRC 1676 / NRRL YB-4239) (Yeast).